Here is a 772-residue protein sequence, read N- to C-terminus: Ion-translocating oxidoreductase complex subunit C (772 aa).

4Fe-4S ferredoxin-type domains lie at 369 to 397 (GEPQ…QQLY) and 407 to 436 (KATT…VQYF). The [4Fe-4S] cluster site is built by Cys377, Cys380, Cys383, Cys387, Cys416, Cys419, Cys422, and Cys426. Positions 599-748 (KARKLEQQQA…EPEEQVDPRK (150 aa)) are disordered.

The protein belongs to the 4Fe4S bacterial-type ferredoxin family. RnfC subfamily. The complex is composed of six subunits: RsxA, RsxB, RsxC, RsxD, RsxE and RsxG. Requires [4Fe-4S] cluster as cofactor.

The protein resides in the cell inner membrane. Part of a membrane-bound complex that couples electron transfer with translocation of ions across the membrane. Required to maintain the reduced state of SoxR. This Shigella dysenteriae serotype 1 (strain Sd197) protein is Ion-translocating oxidoreductase complex subunit C.